A 439-amino-acid chain; its full sequence is MFNFAPKQTTEMKKLLFTLVFVLGSMATALAENYPYRADYLWLTVPNHADWLYKTGERAKVEVSFCLYGMPQNVEVAYEIGPDMMPATSSGKVTLKNGRAVIDMGTMKKPGFLDMRLSVDGKYQHHVKVGFSPELLKPYTKNPQDFDAFWKANLDEARKTPVSVSCNKVDKYTTDAFDCYLLKIKTDRRHSIYGYLTKPKKAGKYPVVLCPPGAGIKTIKEPMRSTFYAKNGFIRLEMEIHGLNPEMTDEQFKEITTAFDYENGYLTNGLDDRDNYYMKHVYVACVRAIDYLTSLPDWDGKNVFVQGGSQGGALSLVTAGLDPRVTACVANHPALSDMAGYLDNRAGGYPHFNRLKNMFTPEKVNTMAYYDVVNFARRITCPVYITWGYNDNVCPPTTSYIVWNLITAPKESLITPINEHWTTSETNYTQMLWLKKQVK.

A signal peptide spans Met-1–Ala-31. The active-site Nucleophile is Ser-309. Catalysis depends on charge relay system residues Asp-391 and His-420.

This sequence belongs to the carbohydrate esterase 7 family.

Its pathway is glycan degradation; xylan degradation. Involved in degradation of plant cell wall polysaccharides. Has acetyl esterase activity towards a broad range of substrates including xylose-tetraacetate, 4-O-methylumbelliferyl acetate, glucose-pentaacetate, cephalosporin C, and acetylated xylo-oligosaccharides smaller than xylo-heptaose. Displays no detectable activity on polymeric acetylated xylan. This chain is Acetyl esterase Axe7A, found in Xylanibacter ruminicola (strain ATCC 19189 / DSM 19721 / CIP 105475 / JCM 8958 / 23) (Prevotella ruminicola).